The following is a 407-amino-acid chain: Ribonuclease Z (407 aa).

The ribonuclease Z stretch occupies residues 1–308 (MEITFLGTSS…QDFLHYAIPR (308 aa)). Zn(2+) is bound by residues H62, H64, D66, H67, H139, D210, and H268. The active-site Proton acceptor is D66. A unknown region spans residues 309 to 407 (DGQICAEMPP…VDWSALNVLF (99 aa)).

The protein belongs to the RNase Z family. In terms of assembly, homodimer. The cofactor is Zn(2+).

The catalysed reaction is Endonucleolytic cleavage of RNA, removing extra 3' nucleotides from tRNA precursor, generating 3' termini of tRNAs. A 3'-hydroxy group is left at the tRNA terminus and a 5'-phosphoryl group is left at the trailer molecule.. In terms of biological role, zinc phosphodiesterase, which displays some tRNA 3'-processing endonuclease activity. Probably involved in tRNA maturation, by removing a 3'-trailer from precursor tRNA. The protein is Ribonuclease Z (rnz) of Thermosynechococcus vestitus (strain NIES-2133 / IAM M-273 / BP-1).